The following is a 652-amino-acid chain: Putative glycine--tRNA ligase (652 aa).

Residues 119–145 are disordered; the sequence is GDKEARGQNSNDQPEESDDKKKRKKKV. Glutamate 221 contributes to the glycine binding site. ATP is bound by residues 253-255 and 264-265; these read RNE and RV. A glycine-binding site is contributed by glutamate 272. 380-381 contributes to the ATP binding site; it reads EC. 499-501 lines the glycine pocket; that stretch reads EPS. Arginine 506 is a binding site for ATP.

Belongs to the class-II aminoacyl-tRNA synthetase family. Homodimer.

It localises to the cytoplasm. The enzyme catalyses tRNA(Gly) + glycine + ATP = glycyl-tRNA(Gly) + AMP + diphosphate. It carries out the reaction 2 ATP + H(+) = P(1),P(4)-bis(5'-adenosyl) tetraphosphate + diphosphate. Functionally, catalyzes the ATP-dependent ligation of glycine to the 3'-end of its cognate tRNA, via the formation of an aminoacyl-adenylate intermediate (Gly-AMP). Also produces diadenosine tetraphosphate (Ap4A), a universal pleiotropic signaling molecule needed for cell regulation pathways, by direct condensation of 2 ATPs. Thereby, may play a special role in Ap4A homeostasis. This is Putative glycine--tRNA ligase (grs1) from Schizosaccharomyces pombe (strain 972 / ATCC 24843) (Fission yeast).